Consider the following 521-residue polypeptide: Medium/long-chain-fatty-acid--[acyl-carrier-protein] ligase MbtM (521 aa).

This sequence belongs to the ATP-dependent AMP-binding enzyme family.

It carries out the reaction a long-chain fatty acid + holo-[ACP] + ATP = a long-chain fatty acyl-[ACP] + AMP + diphosphate. It catalyses the reaction a medium-chain fatty acid + holo-[ACP] + ATP = a medium-chain fatty acyl-[ACP] + AMP + diphosphate. It participates in siderophore biosynthesis; mycobactin biosynthesis. In terms of biological role, activates lipidic moieties required for mycobactin biosynthesis. Converts medium- to long-chain aliphatic fatty acids into acyl adenylate, which is further transferred on to the phosphopantetheine arm of the carrier protein MbtL. This Mycobacterium sp. (strain MCS) protein is Medium/long-chain-fatty-acid--[acyl-carrier-protein] ligase MbtM (mbtM).